The primary structure comprises 255 residues: L-erythrulose-1-phosphate isomerase (255 aa).

H98 acts as the Electrophile in catalysis. Catalysis depends on E171, which acts as the Proton acceptor. Substrate contacts are provided by G177 and S214.

It belongs to the triosephosphate isomerase family. As to quaternary structure, homodimer.

Its subcellular location is the cytoplasm. The enzyme catalyses L-erythrulose 1-phosphate = D-erythrulose 4-phosphate. It functions in the pathway carbohydrate metabolism; erythritol degradation. Functionally, catalyzes the isomerization of D-erythrulose-4P to L-erythrulose-1P. The chain is L-erythrulose-1-phosphate isomerase from Rhizobium meliloti (strain 1021) (Ensifer meliloti).